A 207-amino-acid chain; its full sequence is Peptidyl-tRNA hydrolase (207 aa).

Tyr-30 serves as a coordination point for tRNA. The active-site Proton acceptor is His-35. TRNA-binding residues include Tyr-81, Asn-83, and Asn-129.

The protein belongs to the PTH family. In terms of assembly, monomer.

It is found in the cytoplasm. The catalysed reaction is an N-acyl-L-alpha-aminoacyl-tRNA + H2O = an N-acyl-L-amino acid + a tRNA + H(+). In terms of biological role, hydrolyzes ribosome-free peptidyl-tRNAs (with 1 or more amino acids incorporated), which drop off the ribosome during protein synthesis, or as a result of ribosome stalling. Its function is as follows. Catalyzes the release of premature peptidyl moieties from peptidyl-tRNA molecules trapped in stalled 50S ribosomal subunits, and thus maintains levels of free tRNAs and 50S ribosomes. This Bordetella avium (strain 197N) protein is Peptidyl-tRNA hydrolase.